Consider the following 181-residue polypeptide: uncharacterized protein (181 aa).

A run of 4 helical transmembrane segments spans residues 3 to 23, 67 to 87, 92 to 112, and 159 to 179; these read LSQT…VLIL, ALLL…GLSV, VLGV…VLFI, and MFIL…LWII.

Belongs to the YggT family.

It is found in the cell membrane. This is an uncharacterized protein from Haemophilus influenzae (strain ATCC 51907 / DSM 11121 / KW20 / Rd).